A 111-amino-acid polypeptide reads, in one-letter code: Ribonuclease P protein component (111 aa).

The protein belongs to the RnpA family. In terms of assembly, consists of a catalytic RNA component (M1 or rnpB) and a protein subunit.

The enzyme catalyses Endonucleolytic cleavage of RNA, removing 5'-extranucleotides from tRNA precursor.. Its function is as follows. RNaseP catalyzes the removal of the 5'-leader sequence from pre-tRNA to produce the mature 5'-terminus. It can also cleave other RNA substrates such as 4.5S RNA. The protein component plays an auxiliary but essential role in vivo by binding to the 5'-leader sequence and broadening the substrate specificity of the ribozyme. The chain is Ribonuclease P protein component from Alkaliphilus metalliredigens (strain QYMF).